A 327-amino-acid polypeptide reads, in one-letter code: Cobalamin biosynthesis protein CobD (327 aa).

Helical transmembrane passes span 61–78, 80–102, 160–182, and 300–322; these read MWLT…GLVI, SILP…ILLA, GIVA…YKFI, and AALV…ASLV.

This sequence belongs to the CobD/CbiB family.

The protein localises to the cell membrane. It participates in cofactor biosynthesis; adenosylcobalamin biosynthesis. Converts cobyric acid to cobinamide by the addition of aminopropanol on the F carboxylic group. The chain is Cobalamin biosynthesis protein CobD from Brucella melitensis biotype 1 (strain ATCC 23456 / CCUG 17765 / NCTC 10094 / 16M).